A 157-amino-acid chain; its full sequence is Transcriptional repressor NrdR (157 aa).

The disordered stretch occupies residues 1–24 (MRCPKCGGNKSSVVDSRQAEDGNT). A zinc finger spans residues 3-34 (CPKCGGNKSSVVDSRQAEDGNTIRRRRECEEC). Residues 49-139 (LVVVKKDGTR…VYRSFKDVGE (91 aa)) enclose the ATP-cone domain.

Belongs to the NrdR family. It depends on Zn(2+) as a cofactor.

In terms of biological role, negatively regulates transcription of bacterial ribonucleotide reductase nrd genes and operons by binding to NrdR-boxes. The sequence is that of Transcriptional repressor NrdR from Streptococcus sanguinis (strain SK36).